The primary structure comprises 149 residues: Transcriptional regulator MraZ (149 aa).

SpoVT-AbrB domains are found at residues I5–E52 and A81–V124.

The protein belongs to the MraZ family. Forms oligomers.

The protein resides in the cytoplasm. It localises to the nucleoid. This Nitrosococcus oceani (strain ATCC 19707 / BCRC 17464 / JCM 30415 / NCIMB 11848 / C-107) protein is Transcriptional regulator MraZ.